The chain runs to 149 residues: Aquaporin-like protein 2 (149 aa).

The disordered stretch occupies residues 1-35; the sequence is MSNESNDLEKNISHLDPTGVDNAYIPPEQPETKHS. Residues 1–47 are Cytoplasmic-facing; sequence MSNESNDLEKNISHLDPTGVDNAYIPPEQPETKHSRFNIDRGTLRNH. A helical transmembrane segment spans residues 48–68; it reads FIAAVGEFCGTFMFLWCAYVI. Over 69 to 89 the chain is Extracellular; sequence CNVANHDVALTTEPEGSHPGQ. The chain crosses the membrane as a helical span at residues 90-110; sequence LIMIALGFGFSVMFSIWCFWW. The Cytoplasmic portion of the chain corresponds to 111-149; the sequence is GFEPSRFSLFVFGQSHLTSQMCSDVVSSDHCWDGCWWCR.

This sequence belongs to the MIP/aquaporin (TC 1.A.8) family.

It localises to the endoplasmic reticulum membrane. It is found in the cell membrane. Water channel required to facilitate the transport of water across membranes. Involved in freeze tolerance, osmotolerance and cell flocculation in liquid cultures. Is non-functional in most laboratory strains. The protein is Aquaporin-like protein 2 (AQY2-2) of Saccharomyces cerevisiae (strain Lalvin EC1118 / Prise de mousse) (Baker's yeast).